Here is a 485-residue protein sequence, read N- to C-terminus: Auxin transporter protein 1 (485 aa).

Residues 1–59 (MSEGVEAIVANDNGTDQVNGNRTGKDNEEHDGSTGSNLSNFLWHGGSVWDAWFSCASNQ) lie on the Cytoplasmic side of the membrane. The span at 12–22 (DNGTDQVNGNR) shows a compositional bias: polar residues. The interval 12 to 33 (DNGTDQVNGNRTGKDNEEHDGS) is disordered. The span at 23-32 (TGKDNEEHDG) shows a compositional bias: basic and acidic residues. A helical transmembrane segment spans residues 60–77 (VAQVLLTLPYSFSQLGML). The Extracellular portion of the chain corresponds to 78 to 79 (SG). The helical transmembrane segment at 80–100 (IVLQIFYGLLGSWTAYLISVL) threads the bilayer. Topologically, residues 101 to 135 (YVEYRARKEKEGKSFKNHVIQWFEVLDGLLGSYWK) are cytoplasmic. The helical transmembrane segment at 136-156 (ALGLAFNCTFLLFGSVIQLIA) threads the bilayer. At 157–172 (CASNIYYINDHLDKRT) the chain is on the extracellular side. Residues 173–193 (WTYIFGACCATTVFIPSFHNY) form a helical membrane-spanning segment. At 194 to 196 (RIW) the chain is on the cytoplasmic side. The chain crosses the membrane as a helical span at residues 197–217 (SFLGLGMTTYTAWYLAIASII). At 218–232 (HGQAEGVKHSGPTKL) the chain is on the extracellular side. The helical transmembrane segment at 233–253 (VLYFTGATNILYTFGGHAVTV) threads the bilayer. Over 254–266 (EIMHAMWKPQKFK) the chain is Cytoplasmic. The helical transmembrane segment at 267 to 287 (YIYLMATLYVFTLTIPSAAAV) threads the bilayer. Residues 288-314 (YWAFGDALLDHSNAFSLMPKNAWRDAA) lie on the Extracellular side of the membrane. Residues 315–335 (VILMLIHQFITFGFACTPLYF) form a helical membrane-spanning segment. Residues 336-356 (VWEKVIGMHDTKSICLRALAR) lie on the Cytoplasmic side of the membrane. A helical transmembrane segment spans residues 357–377 (LPVVIPIWFLAIIFPFFGPIN). A topological domain (extracellular) is located at residue serine 378. A helical transmembrane segment spans residues 379-399 (AVGALLVSFTVYIIPSLAHML). The Cytoplasmic segment spans residues 400–425 (TYRSASARQNAAEKPPFFMPSWTAMY). A helical membrane pass occupies residues 426-446 (VLNAFVVVWVLIVGFGFGGWA). Residues 447–485 (SVTNFVRQVDTFGLFAKCYQCKPAAAAAHAPVSALHHRL) lie on the Extracellular side of the membrane.

It belongs to the amino acid/polyamine transporter 2 family. Amino acid/auxin permease (AAAP) (TC 2.A.18.1) subfamily. Expressed in root and shoot apical tissues. In root apex, confined to stele initials, protophloem poles, statolith-containing S2 columella cells, lateral root cap cells (LRC), and in epidermal cells from the distal elongation zone (DEZ) up to central elongation zone (CEZ).

Its subcellular location is the cell membrane. Its activity is regulated as follows. Auxin uptake mediated by AUX1 is inhibited by chromosaponin-1 (CSI), 1-naphthoxyacetic acid (1-NOA) and 3-chloro-4-hydroxyphenylacetic acid (CHPAA). Its function is as follows. Carrier protein involved in proton-driven auxin influx. Mediates the formation of auxin gradient from developing leaves (site of auxin biosynthesis) to tips by contributing to the loading of auxin in vascular tissues and facilitating acropetal (base to tip) auxin transport within inner tissues of the root apex, and basipetal (tip to base) auxin transport within outer tissues of the root apex. Unloads auxin from the mature phloem to deliver the hormone to the root meristem via the protophloem cell files. Coordinated subcellular localization of AUX1 is regulated by a brefeldin A-sensitive (BFA) vesicle trafficking process. Involved in lateral root formation, trichoblast polarization and root hair elongation. Required for gravitropism and thigmotropism, especially in roots, by modulating responses to auxin, ethylene and cytokinins such as benzyladenine (BA). Needed for ammonium-mediated root-growth inhibition. Confers sensitivity to the herbicide 2,4-dichlorophenoxyacetic acid (2,4-D, auxin analog), and to polar auxin transport inhibitors such as N-1-naphthylphthalamic acid (NPA) and 2,3,5-triiodobenzoic acid (TIBA). This Arabidopsis thaliana (Mouse-ear cress) protein is Auxin transporter protein 1 (AUX1).